Here is a 64-residue protein sequence, read N- to C-terminus: MSSKGGSSGGMWSVFIHGHDGSNKGSKTYTSSGSGMWGGGSSSGVKSGVNGGVNGGVKSGTGKI.

The disordered stretch occupies residues 1 to 64 (MSSKGGSSGG…GGVKSGTGKI (64 aa)). A compositionally biased stretch (low complexity) spans 23-34 (NKGSKTYTSSGS). Gly residues predominate over residues 49–64 (VNGGVNGGVKSGTGKI).

This sequence belongs to the orthopoxvirus OPG024 family.

This is OPG024 protein (OPG023) from Cynomys gunnisoni (Gunnison's prairie dog).